Reading from the N-terminus, the 926-residue chain is Storkhead-box protein 2 (926 aa).

Disordered stretches follow at residues 1–32, 338–391, 452–529, 564–588, 632–672, 724–803, and 825–926; these read MKKT…RSEK, EEEK…HLDI, EMPF…SYID, KEPS…YGEL, GVKK…GGVA, LKSH…GTMQ, and LAPK…VTSV. Positions 18–32 are enriched in basic and acidic residues; the sequence is FSDRASDRMRSRSEK. Over residues 353 to 378 the composition is skewed to basic residues; it reads HSGRSKKSRTHRKSHGKSRSHSKTRV. A compositionally biased stretch (basic and acidic residues) spans 379 to 391; the sequence is SKGDPSDGSHLDI. Basic residues predominate over residues 463-472; that stretch reads SHSKVHRSHS. Residues 473 to 495 show a composition bias toward basic and acidic residues; it reads HTQDRRSRNERSNKAKERSRSMD. Polar residues predominate over residues 518-529; sequence QDDQTPSQSYID. A compositionally biased stretch (basic and acidic residues) spans 632 to 658; it reads GVKKLSPSDRQVPHSSREPVGHKEESP. The span at 746–769 shows a compositional bias: polar residues; the sequence is LGTSAAQAMPASQRQQESGGNQEA. Basic and acidic residues predominate over residues 785–799; it reads GANKNTEEEKNREDV. Polar residues-rich tracts occupy residues 847–884 and 914–926; these read MDSS…QNPA and KPSN…VTSV.

The chain is Storkhead-box protein 2 (STOX2) from Homo sapiens (Human).